Here is a 240-residue protein sequence, read N- to C-terminus: ATP synthase subunit a (240 aa).

Transmembrane regions (helical) follow at residues 21-41 (LSSM…AMLF), 83-103 (AVTL…FAII), 116-136 (DPTV…FYGV), 184-204 (LLGL…GAAI), and 207-227 (LIWQ…FVML).

The protein belongs to the ATPase A chain family. F-type ATPases have 2 components, CF(1) - the catalytic core - and CF(0) - the membrane proton channel. CF(1) has five subunits: alpha(3), beta(3), gamma(1), delta(1), epsilon(1). CF(0) has three main subunits: a(1), b(2) and c(9-12). The alpha and beta chains form an alternating ring which encloses part of the gamma chain. CF(1) is attached to CF(0) by a central stalk formed by the gamma and epsilon chains, while a peripheral stalk is formed by the delta and b chains.

It localises to the cell membrane. In terms of biological role, key component of the proton channel; it plays a direct role in the translocation of protons across the membrane. This is ATP synthase subunit a from Macrococcus caseolyticus (strain JCSC5402) (Macrococcoides caseolyticum).